Reading from the N-terminus, the 374-residue chain is 8-amino-7-oxononanoate synthase (374 aa).

Residues arginine 22 and arginine 29 each contribute to the substrate site. A pyridoxal 5'-phosphate-binding site is contributed by glycine 109–tyrosine 110. Residue histidine 134 participates in substrate binding. Pyridoxal 5'-phosphate contacts are provided by residues serine 182, aspartate 207–histidine 210, and threonine 227–lysine 230. N6-(pyridoxal phosphate)lysine is present on lysine 230. A substrate-binding site is contributed by threonine 339.

It belongs to the class-II pyridoxal-phosphate-dependent aminotransferase family. BioF subfamily. In terms of assembly, homodimer. The cofactor is pyridoxal 5'-phosphate.

The enzyme catalyses 6-carboxyhexanoyl-[ACP] + L-alanine + H(+) = (8S)-8-amino-7-oxononanoate + holo-[ACP] + CO2. It functions in the pathway cofactor biosynthesis; biotin biosynthesis. Functionally, catalyzes the decarboxylative condensation of pimeloyl-[acyl-carrier protein] and L-alanine to produce 8-amino-7-oxononanoate (AON), [acyl-carrier protein], and carbon dioxide. The polypeptide is 8-amino-7-oxononanoate synthase (Methylobacterium radiotolerans (strain ATCC 27329 / DSM 1819 / JCM 2831 / NBRC 15690 / NCIMB 10815 / 0-1)).